We begin with the raw amino-acid sequence, 201 residues long: Syndecan-2 (201 aa).

Positions M1–A18 are cleaved as a signal peptide. Residues E19–E144 lie on the Extracellular side of the membrane. Residues S41, S55, and S57 are each glycosylated (O-linked (Xyl...) (glycosaminoglycan) serine). 2 disordered regions span residues G42–T70 and T90–V130. Positions T90 to K102 are enriched in polar residues. O-linked (GalNAc...) threonine glycosylation occurs at T101. Positions S103–P123 are enriched in basic and acidic residues. S115 is modified (phosphoserine; by FAM20C). Residues V145 to Y169 traverse the membrane as a helical segment. The Cytoplasmic segment spans residues R170–A201. A disordered region spans residues S178–A201. S187 is subject to Phosphoserine.

It belongs to the syndecan proteoglycan family. Interacts (via cytoplasmic domain) with SARM1. Forms a complex with SDCBP and PDCD6IP. O-glycosylated with core 1 or possibly core 8 glycans. Contains heparan sulfate. Also contains chondroitin sulfate.

Its subcellular location is the membrane. Its function is as follows. Cell surface proteoglycan which regulates dendritic arbor morphogenesis. The sequence is that of Syndecan-2 (SDC2) from Homo sapiens (Human).